An 892-amino-acid chain; its full sequence is MDHYDSQQTNDYMQPEEDWDRDLLLDPAWEKQQRKTFTAWCNSHLRKAGTQIENIEEDFRDGLKLMLLLEVISGERLAKPERGKMRVHKISNVNKALDFIASKGVKLVSIGAEEIVDGNVKMTLGMIWTIILRFAIQDISVEETSAKEGLLLWCQRKTAPYKNVNIQNFHISWKDGLGFCALIHRHRPELIDYGKLRKDDPLTNLNTAFDVAEKYLDIPKMLDAEDIVGTARPDEKAIMTYVSSFYHAFSGAQKAETAANRICKVLAVNQENEQLMEDYEKLASDLLEWIRRTIPWLENRVPENTMHAMQQKLEDFRDYRRLHKPPKVQEKCQLEINFNTLQTKLRLSNRPAFMPSEGRMVSDINNAWGCLEQVEKGYEEWLLNEIRRLERLDHLAEKFRQKASIHEAWTDGKEAMLRQKDYETATLSEIKALLKKHEAFESDLAAHQDRVEQIAAIAQELNELDYYDSPSVNARCQKICDQWDNLGALTQKRREALERTEKLLETIDQLYLEYAKRAAPFNNWMEGAMEDLQDTFIVHTIEEIQGLTTAHEQFKATLPDADKERLAILGIHNEVSKIVQTYHVNMAGTNPYTTITPQEINGKWDHVRQLVPRRDQALTEEHARQQHNERLRKQFGAQANVIGPWIQTKMEEIGRISIEMHGTLEDQLSHLRQYEKSIVNYKPKIDQLEGDHQLIQEALIFDNKHTNYTMEHIRVGWEQLLTTIARTINEVENQILTRDAKGISQEQMNEFRASFNHFDRDHSGTLGPEEFKACLISLGYDIGNDPQGEAEFARIMSIVDPNRLGVVTFQAFIDFMSRETADTDTADQVMASFKILAGDKNYITMDELRRELPPDQAEYCIARMAPYTGPDSVPGALDYMSFSTALYGESDL.

The residue at position 1 (Met-1) is an N-acetylmethionine. The tract at residues Met-1–His-247 is actin-binding. Position 6 is a phosphoserine (Ser-6). Tyr-12 is subject to Phosphotyrosine; by FAK1. Calponin-homology (CH) domains lie at Lys-31 to Ala-135 and Thr-144 to Ser-250. N6-acetyllysine is present on residues Lys-95 and Lys-195. Spectrin repeat units follow at residues Gln-274–Asn-384, His-394–Arg-499, Gln-509–Glu-620, and Arg-630–Asn-733. The interaction with DDN stretch occupies residues Gln-274 to Asn-733. The residue at position 471 (Ser-471) is a Phosphoserine. An N6-acetyllysine modification is found at Lys-676. Phosphoserine is present on Ser-677. 2 EF-hand domains span residues Glu-746–Asp-781 and Gln-787–Asp-822. Residues Asp-759, Asp-761, Ser-763, Thr-765, and Glu-770 each coordinate Ca(2+). At Ser-890 the chain carries Phosphoserine.

Belongs to the alpha-actinin family. In terms of assembly, homodimer; antiparallel. Interacts with MYOZ2, TTID and LPP. Interacts with DDN. Interacts with PSD. Interacts with MICALL2. Interacts with DNM2 and CTTN. Interacts with PDLIM1. Interacts with PDLIM2. Interacts with PDLIM4 (via PDZ domain). Interacts with IGSF8.

The protein resides in the cytoplasm. It is found in the cytoskeleton. The protein localises to the myofibril. Its subcellular location is the sarcomere. It localises to the z line. The protein resides in the cell membrane. It is found in the cell junction. The protein localises to the cell projection. Its subcellular location is the ruffle. In terms of biological role, F-actin cross-linking protein which is thought to anchor actin to a variety of intracellular structures. Association with IGSF8 regulates the immune synapse formation and is required for efficient T-cell activation. This is Alpha-actinin-1 (ACTN1) from Homo sapiens (Human).